The primary structure comprises 85 residues: N.vectensis toxin 1 5 (85 aa).

Positions 1 to 20 (MASFKIVIVCLALLVAVACA) are cleaved as a signal peptide. Positions 21-36 (RRRDMMSDDELDFHLS) are excised as a propeptide. Cystine bridges form between Cys-42–Cys-82, Cys-44–Cys-72, and Cys-65–Cys-83.

This sequence belongs to the sea anemone sodium channel inhibitory toxin family. Type II subfamily. Expressed in ectodermal glands and in clumps outside of the extodermal layer. Is not expressed in nematocytes. In adult female tissues, shows similar expression levels in mesenteries (gametes-producing tissue), tentacles, pharynx and physa.

It localises to the secreted. Its function is as follows. Binds to site 3 of voltage-gated sodium channels and inhibits the inactivation process. Is highly active on DmNav1/TipE (drosophila) and is only extremely weakly active on rat Nav1.4-beta-1/SCN4A-SCN1B, and on human Nav1.5-beta-1/SCN5A-beta-1. This reveals high specificity for arthropod over mammalian channels. In vivo, when released into the medium, this recombinant toxin induces impaired swimming, paralysis and death of the crustacean A.nauplii within several hours. Also causes paralysis of cherry shrimps immediately after injection at very low doses. Its effect on zebrafish (D.rerio) larvae is also rapid, since it induces tail twitching accompanied by impaired swimming after 20 minutes and complete paralysis within 45 minutes. It has also been observed to cause death of zebrafish larvae within 1 hour. In Nematostella vectensis (Starlet sea anemone), this protein is N.vectensis toxin 1 5.